Consider the following 496-residue polypeptide: Galactose/methyl galactoside import ATP-binding protein MglA (496 aa).

ABC transporter domains are found at residues 5-240 and 243-496; these read LTIR…VGRT and KRFP…ARYL. 37-44 is an ATP binding site; that stretch reads GENGAGKS.

Belongs to the ABC transporter superfamily. Galactose/methyl galactoside importer (TC 3.A.1.2.3) family. The complex is composed of one ATP-binding protein (MglA), two transmembrane proteins (MglC) and a solute-binding protein (MglB).

Its subcellular location is the cell inner membrane. The catalysed reaction is D-galactose(out) + ATP + H2O = D-galactose(in) + ADP + phosphate + H(+). It catalyses the reaction methyl beta-D-galactoside(out) + ATP + H2O = methyl beta-D-galactoside(in) + ADP + phosphate + H(+). Part of the ABC transporter complex MglABC involved in galactose/methyl galactoside import. Responsible for energy coupling to the transport system. The protein is Galactose/methyl galactoside import ATP-binding protein MglA of Treponema pallidum (strain Nichols).